A 183-amino-acid chain; its full sequence is Small ribosomal subunit protein uS4c (183 aa).

Positions 82 to 143 (MRLDNILFRL…KQRSKALIQN (62 aa)) constitute an S4 RNA-binding domain.

Belongs to the universal ribosomal protein uS4 family. As to quaternary structure, part of the 30S ribosomal subunit. Contacts protein S5. The interaction surface between S4 and S5 is involved in control of translational fidelity.

The protein resides in the plastid. The protein localises to the chloroplast. Functionally, one of the primary rRNA binding proteins, it binds directly to 16S rRNA where it nucleates assembly of the body of the 30S subunit. With S5 and S12 plays an important role in translational accuracy. The chain is Small ribosomal subunit protein uS4c (rps4) from Babiana stricta (Baboon flower).